The primary structure comprises 371 residues: Caytaxin (371 aa).

The disordered stretch occupies residues 1–54; that stretch reads MGTTEATLRMENVDVKEEWQDEDLPRPLPEETGVELLGSPVEDTSSPPNTLNFN. Basic and acidic residues predominate over residues 11 to 29; the sequence is ENVDVKEEWQDEDLPRPLP. The span at 42–53 shows a compositional bias: polar residues; that stretch reads EDTSSPPNTLNF. The required for interaction with KLC1 stretch occupies residues 115–120; sequence ELEWGD. The CRAL-TRIO domain occupies 171–328; that stretch reads IRPYMKVVTH…CVLQYEEERL (158 aa). The segment at 190 to 371 is mediates interaction with GLS; sequence AIIVFAACFL…VTEDQETSMS (182 aa). The tract at residues 331-371 is disordered; the sequence is RRESARPQPEFVMPRSEEKPEVAPVENRSAPVTEDQETSMS.

In terms of assembly, interacts with KLC1; may link mitochondria to KLC1 and regulate mitochondria localization into neuron projections. Interacts with GLS; the interaction is direct and may control GLS localization, negatively regulating its activity. Interacts with PIN1 (via WW domain); upon NGF stimulation. The interaction with PIN1 and GLS is competitive. Post-translationally, cleaved by CASP3 and CASP7. The potential C-terminal product released by CASP3 cleavage may inhibit the ERK signaling pathway through MAP2K2. In terms of processing, may be ubiquitinated by STUB1.

The protein localises to the cell projection. The protein resides in the axon. Its subcellular location is the dendrite. It is found in the presynapse. It localises to the mitochondrion. The protein localises to the growth cone. The protein resides in the cytoplasm. Functions in the development of neural tissues, particularly the postnatal maturation of the cerebellar cortex. May play a role in neurotransmission through regulation of glutaminase/GLS, an enzyme responsible for the production in neurons of the glutamate neurotransmitter. Alternatively, may regulate the localization of mitochondria within axons and dendrites. This is Caytaxin (ATCAY) from Macaca fascicularis (Crab-eating macaque).